The primary structure comprises 146 residues: Snaclec 1 (146 aa).

The first 23 residues, methionine 1–alanine 23, serve as a signal peptide directing secretion. 3 disulfides stabilise this stretch: cysteine 25-cysteine 36, cysteine 53-cysteine 142, and cysteine 119-cysteine 134. The region spanning tyrosine 32–lysine 143 is the C-type lectin domain.

It belongs to the snaclec family. Heterodimer; disulfide-linked. Expressed by the venom gland.

The protein resides in the secreted. Functionally, interferes with one step of hemostasis (modulation of platelet aggregation, or coagulation cascade, for example). The polypeptide is Snaclec 1 (Bitis arietans (African puff adder)).